The following is a 1115-amino-acid chain: Lateral signaling target protein 2 homolog (1115 aa).

Disordered stretches follow at residues 308 to 488 (PLGS…DSDS), 545 to 586 (SEDD…PSTS), 600 to 742 (RLPS…SLSD), and 879 to 1027 (VQSS…PDGK). Positions 322–361 (NNSSSTTNTSNNNNNNTNNNNSSSGSDCTNNDKTGTTTNT) are enriched in low complexity. A compositionally biased stretch (basic and acidic residues) spans 363-373 (KPVERLVDHRN). Low complexity-rich tracts occupy residues 374 to 417 (NNTT…TPTA) and 425 to 444 (PSHS…NSPA). Residues 449–488 (YDDDDEDDDDDDVHADVEEDEDESGILDSDEHDLNDDSDS) are compositionally biased toward acidic residues. Low complexity-rich tracts occupy residues 558-577 (QQQQ…QQQQ) and 600-614 (RLPS…SSNN). 2 positions are modified to phosphoserine: S603 and S604. Positions 615-628 (QQMTIKSPSEQTTT) are enriched in polar residues. Basic residues predominate over residues 632 to 655 (SNRHRHHSHHHHHHHHSHHHHHHQ). The segment covering 658–676 (AAVAVAAAQDEQHNNNQPH) has biased composition (low complexity). Over residues 677–706 (SHSHSSSHHHHHNHQSHSHPHRANRSTRKR) the composition is skewed to basic residues. Low complexity-rich tracts occupy residues 714 to 726 (TITT…GGEQ), 733 to 742 (DSSTASSLSD), and 881 to 901 (SSNS…AARS). S908 carries the post-translational modification Phosphoserine. Low complexity-rich tracts occupy residues 921–975 (QQQQ…SPVS) and 988–1020 (TTTT…MSPP). The FYVE-type zinc-finger motif lies at 1025–1085 (DGKAPRCMSC…VCRECFMREV (61 aa)). Residues C1031, C1034, C1047, C1050, C1055, C1058, C1077, and C1080 each coordinate Zn(2+). The tract at residues 1088 to 1115 (SHSHGQSQSQIHSPTQQAGGRPQAASAS) is disordered. A compositionally biased stretch (low complexity) spans 1090 to 1100 (SHGQSQSQIHS).

This sequence belongs to the lst-2 family.

Negative regulator of epidermal growth factor receptor (EGFR) signaling. This Drosophila grimshawi (Hawaiian fruit fly) protein is Lateral signaling target protein 2 homolog.